A 387-amino-acid polypeptide reads, in one-letter code: Arginine biosynthesis bifunctional protein ArgJ 2 (387 aa).

Substrate is bound by residues threonine 147, lysine 169, threonine 180, glutamate 259, asparagine 382, and threonine 387. The active-site Nucleophile is the threonine 180.

It belongs to the ArgJ family. In terms of assembly, heterotetramer of two alpha and two beta chains.

The protein resides in the cytoplasm. The catalysed reaction is N(2)-acetyl-L-ornithine + L-glutamate = N-acetyl-L-glutamate + L-ornithine. It catalyses the reaction L-glutamate + acetyl-CoA = N-acetyl-L-glutamate + CoA + H(+). Its pathway is amino-acid biosynthesis; L-arginine biosynthesis; L-ornithine and N-acetyl-L-glutamate from L-glutamate and N(2)-acetyl-L-ornithine (cyclic): step 1/1. The protein operates within amino-acid biosynthesis; L-arginine biosynthesis; N(2)-acetyl-L-ornithine from L-glutamate: step 1/4. Catalyzes two activities which are involved in the cyclic version of arginine biosynthesis: the synthesis of N-acetylglutamate from glutamate and acetyl-CoA as the acetyl donor, and of ornithine by transacetylation between N(2)-acetylornithine and glutamate. This chain is Arginine biosynthesis bifunctional protein ArgJ 2, found in Nostoc sp. (strain PCC 7120 / SAG 25.82 / UTEX 2576).